The primary structure comprises 515 residues: MARMGLAGAAGRWWGLALGLTAFFLPGAHTQVVQVNDSMYGFIGTDVVLHCSFANPLPGVKITQVTWQKATNGSKQNVAIYNPAMGVSVLAPYRERVEFLRPSFTDGTIRLSRLELEDEGVYICEFATFPAGNRESQLNLTVMAKPTNWIEGTQAVLRAKKGKDDKVLVATCTSANGKPPSVVSWETHLKGEAEYQEIRNPNGTVTVISRYRLVPSREDHRQSLACIVNYHMDRFRESLTLNVQYEPEVTIEGFDGNWYLQRMDVKLTCKADANPPATEYHWTTLNGSLPKGVEAQNRTLFFRGPINYSMAGTYICEATNPIGTRSGQVEVNITEFPYTPSPPEHGRRAGQVPTAIIGGVVGSILLVLFVVGGIVVALCRRRHTFKGDYSTKKHVYGNGYSKAGIPQHHPPMAQNLQYPEDSDDEKKAGPLGGSSYEEEEEEEGGGGERKVGGPHPKYDEDAKRPYFTVDEAEARQDGYGDRTLGYQYDPEQLDLAENMVSQNDGSFISKKEWYV.

The signal sequence occupies residues 1–30 (MARMGLAGAAGRWWGLALGLTAFFLPGAHT). Residues 31–141 (QVVQVNDSMY…GNRESQLNLT (111 aa)) enclose the Ig-like V-type domain. Topologically, residues 31 to 355 (QVVQVNDSMY…GRRAGQVPTA (325 aa)) are extracellular. N-linked (GlcNAc...) asparagine glycosylation is found at Asn36, Asn72, Asn139, Asn202, Asn286, Asn297, Asn307, and Asn332. Cysteines 51 and 124 form a disulfide. Ig-like C2-type domains follow at residues 145–243 (KPTN…TLNV) and 247–334 (PEVT…VNIT). Cystine bridges form between Cys172–Cys226 and Cys269–Cys316. Residues 282-299 (WTTLNGSLPKGVEAQNRT) form an interaction with FGFR region. Residues 356–376 (IIGGVVGSILLVLFVVGGIVV) form a helical membrane-spanning segment. The Cytoplasmic portion of the chain corresponds to 377–515 (ALCRRRHTFK…SFISKKEWYV (139 aa)). The interval 400–486 (YSKAGIPQHH…DGYGDRTLGY (87 aa)) is disordered. Phosphoserine is present on residues Ser422, Ser434, and Ser435. At Tyr436 the chain carries Phosphotyrosine. Over residues 436–445 (YEEEEEEEGG) the composition is skewed to acidic residues. Residues 446-464 (GGERKVGGPHPKYDEDAKR) are compositionally biased toward basic and acidic residues. Ser509 carries the phosphoserine modification.

Belongs to the nectin family. In terms of assembly, (Microbial infection) Interacts with herpes pseudorabies virus/PRV envelope glycoprotein D.

It localises to the cell membrane. The protein localises to the cell junction. It is found in the adherens junction. The protein resides in the presynaptic cell membrane. Its function is as follows. (Microbial infection) Acts as a receptor for herpes simplex virus 1/HHV-1, herpes simplex virus 2/HHV-2, and pseudorabies virus/PRV. In Sus scrofa (Pig), this protein is Nectin-1.